The chain runs to 885 residues: High affinity cAMP-specific and IBMX-insensitive 3',5'-cyclic phosphodiesterase 8B (885 aa).

2 disordered regions span residues 18 to 41 (RDSDESSSPRQTTSVSQGPAAPLP) and 72 to 95 (TELGSGSSAGSAAPAATTSRGRRR). Polar residues predominate over residues 23 to 34 (SSSPRQTTSVSQ). Positions 75–90 (GSGSSAGSAAPAATTS) are enriched in low complexity. Residues 267–338 (ACNSVFTALD…DTINTCIKKG (72 aa)) form the PAS domain. Positions 393-436 (IHRDSGDNSQTEPHSFRYKNRRKESIDVKSISSRGSDAPSLQNR) are disordered. Over residues 422–436 (SISSRGSDAPSLQNR) the composition is skewed to polar residues. Ser-517 is modified (phosphoserine). Positions 539-875 (TINDVPPCIS…KHWKTLDDLK (337 aa)) constitute a PDEase domain. The Proton donor role is filled by His-615. Residues His-619, His-655, and Asp-656 each coordinate a divalent metal cation. The residue at position 754 (Ser-754) is a Phosphoserine. Asp-781 contributes to the a divalent metal cation binding site.

It belongs to the cyclic nucleotide phosphodiesterase family. PDE8 subfamily. A divalent metal cation is required as a cofactor. As to expression, abundantly expressed in the thyroid. Also very weakly expressed in brain, spinal cord and placenta. In the thyroid isoform 1 predominates, and isoforms 2 and 6 are also highly expressed. In the placenta isoforms 1 and 2 are expressed equally. In the brain isoform 2 predominates.

The catalysed reaction is 3',5'-cyclic AMP + H2O = AMP + H(+). The protein operates within purine metabolism; 3',5'-cyclic AMP degradation; AMP from 3',5'-cyclic AMP: step 1/1. With respect to regulation, inhibited by dipyridimole. Insensitive to selective PDE inhibitors including rolipram and milrinone as well as to the non-selective inhibitor, IBMX. Unaffected by cGMP. Functionally, hydrolyzes the second messenger cAMP, which is a key regulator of many important physiological processes. May be involved in specific signaling in the thyroid gland. The protein is High affinity cAMP-specific and IBMX-insensitive 3',5'-cyclic phosphodiesterase 8B (PDE8B) of Homo sapiens (Human).